The chain runs to 368 residues: 2-aminoethylphosphonate--pyruvate transaminase (368 aa).

An N6-(pyridoxal phosphate)lysine modification is found at Lys-192.

It belongs to the class-V pyridoxal-phosphate-dependent aminotransferase family. PhnW subfamily. In terms of assembly, homodimer. Pyridoxal 5'-phosphate serves as cofactor.

The enzyme catalyses (2-aminoethyl)phosphonate + pyruvate = phosphonoacetaldehyde + L-alanine. Involved in phosphonate degradation. In Pseudomonas putida (strain W619), this protein is 2-aminoethylphosphonate--pyruvate transaminase.